Consider the following 119-residue polypeptide: Large ribosomal subunit protein bL20c (119 aa).

Belongs to the bacterial ribosomal protein bL20 family.

The protein resides in the plastid. Its subcellular location is the chloroplast. Binds directly to 23S ribosomal RNA and is necessary for the in vitro assembly process of the 50S ribosomal subunit. It is not involved in the protein synthesizing functions of that subunit. The protein is Large ribosomal subunit protein bL20c of Saccharum hybrid (Sugarcane).